A 142-amino-acid chain; its full sequence is Small ribosomal subunit protein bS6 (142 aa).

Residues 113–136 are compositionally biased toward basic and acidic residues; sequence IKKEPREPREPRAPREPKAEKIEE. The tract at residues 113–142 is disordered; the sequence is IKKEPREPREPRAPREPKAEKIEEQTFSEE.

The protein belongs to the bacterial ribosomal protein bS6 family.

Its function is as follows. Binds together with bS18 to 16S ribosomal RNA. The chain is Small ribosomal subunit protein bS6 from Campylobacter curvus (strain 525.92).